A 194-amino-acid chain; its full sequence is MALRELKVCLLGDTGVGKSSIVWRFVEDSFDPNINPTIGASFMTKTVQYQNELHKFLIWDTAGQEAFRALAPMYYRGSAAAIIVYDITKEETFSTLKNWVKELRQHGPPNIVVAIAGNKCDLIDVREVMERDAKDYADSIHAIFVETSAKNAININELFIEISRRIPSADANPPSGGKGFKLRRQPSEPQRSCC.

12-20 (GDTGVGKSS) provides a ligand contact to GTP. The short motif at 34–42 (INPTIGASF) is the Effector region element. GTP is bound by residues 60–64 (DTAGQ), 118–121 (NKCD), and 148–150 (SAK). The disordered stretch occupies residues 170-194 (DANPPSGGKGFKLRRQPSEPQRSCC). Residues C193 and C194 are each lipidated (S-geranylgeranyl cysteine).

Belongs to the small GTPase superfamily. Rab family. Interacts directly with ZFYVE20. Interacts (in its GTP-bound form) with RINL and RABGEF1. Binds EEA1.

It is found in the endosome membrane. Its subcellular location is the cell membrane. It localises to the early endosome. The protein localises to the late endosome. The protein resides in the cell projection. It is found in the ruffle. Its subcellular location is the cytoplasmic vesicle. It localises to the phagosome. The protein localises to the phagosome membrane. Plays a role in endocytosis and intracellular protein transport. Mediates trafficking of TF from early endosomes to recycling endosomes. Required for NGF-mediated endocytosis of NTRK1, and subsequent neurite outgrowth. Binds GTP and GDP and has low GTPase activity. Alternates between a GTP-bound active form and a GDP-bound inactive form. The sequence is that of Ras-related protein Rab-22A (RAB22A) from Canis lupus familiaris (Dog).